Here is a 128-residue protein sequence, read N- to C-terminus: Large ribosomal subunit protein uL22 (128 aa).

Belongs to the universal ribosomal protein uL22 family. As to quaternary structure, part of the 50S ribosomal subunit.

This protein binds specifically to 23S rRNA; its binding is stimulated by other ribosomal proteins, e.g. L4, L17, and L20. It is important during the early stages of 50S assembly. It makes multiple contacts with different domains of the 23S rRNA in the assembled 50S subunit and ribosome. Functionally, the globular domain of the protein is located near the polypeptide exit tunnel on the outside of the subunit, while an extended beta-hairpin is found that lines the wall of the exit tunnel in the center of the 70S ribosome. The sequence is that of Large ribosomal subunit protein uL22 from Prochlorococcus marinus (strain AS9601).